Here is a 244-residue protein sequence, read N- to C-terminus: Futalosine hydrolase (244 aa).

It belongs to the PNP/UDP phosphorylase family. Futalosine hydrolase subfamily.

The enzyme catalyses futalosine + H2O = dehypoxanthine futalosine + hypoxanthine. It functions in the pathway quinol/quinone metabolism; menaquinone biosynthesis. Functionally, catalyzes the hydrolysis of futalosine (FL) to dehypoxanthine futalosine (DHFL) and hypoxanthine, a step in the biosynthesis of menaquinone (MK, vitamin K2). Cannot directly use aminodeoxyfutalosine (AFL) as a substrate. The protein is Futalosine hydrolase of Acidothermus cellulolyticus (strain ATCC 43068 / DSM 8971 / 11B).